The following is a 994-amino-acid chain: E3 ubiquitin-protein ligase Arkadia (994 aa).

Residues lysine 19, lysine 28, lysine 34, lysine 47, lysine 59, lysine 73, lysine 87, lysine 96, and lysine 110 each participate in a glycyl lysine isopeptide (Lys-Gly) (interchain with G-Cter in SUMO2) cross-link. A compositionally biased stretch (basic and acidic residues) spans 66–89 (HLCDDSQKQEKEMNGNQQEQEKSL). The tract at residues 66–106 (HLCDDSQKQEKEMNGNQQEQEKSLVVRKKRKSQQAGPSYVQ) is disordered. A disordered region spans residues 120–191 (QHLGTPSDED…HKWPRTETES (72 aa)). Residues 132–151 (SSFSDCLSSPSSSLHFGDSD) show a composition bias toward low complexity. Residues 164-173 (RHSQTILNAK) are compositionally biased toward polar residues. Lysine 173 is covalently cross-linked (Glycyl lysine isopeptide (Lys-Gly) (interchain with G-Cter in SUMO2)). Positions 174 to 184 (SRSHSARSHKW) are enriched in basic residues. Glycyl lysine isopeptide (Lys-Gly) (interchain with G-Cter in SUMO2) cross-links involve residues lysine 198 and lysine 218. The segment at 212-277 (CRKRFVKNNS…SSSTEGEEDL (66 aa)) is disordered. The segment covering 234 to 247 (MQRKKREVLARRKY) has biased composition (basic residues). The interval 241–404 (VLARRKYALL…VPTTSARMES (164 aa)) is interaction with AXIN1. The span at 252–271 (SSSSSSENDLSSESSSSSST) shows a compositional bias: low complexity. The SUMO interaction motif 1 (SIM) signature appears at 300–304 (VVVIE). The short motif at 325–331 (EVEIVTV) is the SUMO interaction motif 2 (SIM) element. Positions 337 to 371 (SRSTLGHSRSHWSQGSSSHASRPQEPRNRSRISTV) are disordered. A compositionally biased stretch (low complexity) spans 347 to 357 (HWSQGSSSHAS). Residues 382–386 (VVDLT) carry the SUMO interaction motif 3 (SIM) motif. Disordered regions lie at residues 388–476 (DEDE…AMPR), 508–537 (HGHHFQHHHHHHHTPHPAVPVSPSFSDPAC), 610–684 (APSQ…VDYV), and 696–742 (ISSH…APPA). Positions 395–467 (VPTTSARMES…SRRTTSSAVT (73 aa)) are enriched in polar residues. Positions 508–522 (HGHHFQHHHHHHHTP) are enriched in basic residues. A compositionally biased stretch (pro residues) spans 670–680 (NPPPQTQPPPQ). The segment at 907–909 (YPH) is ubiquitin binding. Glycyl lysine isopeptide (Lys-Gly) (interchain with G-Cter in SUMO2) cross-links involve residues lysine 923 and lysine 927. Residues cysteine 942 and cysteine 945 each coordinate Zn(2+). The RING-type; atypical zinc finger occupies 942–983 (CTICLSILEEGEDVRRLPCMHLFHQVCVDQWLITNKKCPICR). The tract at residues 957-961 (RLPCM) is ubiquitin binding. Zn(2+) contacts are provided by histidine 965 and cysteine 968.

It belongs to the Arkadia family. As to quaternary structure, monomer. Interacts with SMAD6, SMAD7, AXIN1, AXIN2 and SKIL isoform SNON. Interacts with (phosphorylated) SMAD2 and SMAD3. Part of a complex containing RNF111, AXIN1 and SMAD7. Interacts (via SIM domains) with SUMO1 and SUMO2. In terms of tissue distribution, broadly expressed.

The protein localises to the nucleus. It localises to the cytoplasm. It is found in the PML body. It carries out the reaction S-ubiquitinyl-[E2 ubiquitin-conjugating enzyme]-L-cysteine + [acceptor protein]-L-lysine = [E2 ubiquitin-conjugating enzyme]-L-cysteine + N(6)-ubiquitinyl-[acceptor protein]-L-lysine.. Its pathway is protein modification; protein ubiquitination. With respect to regulation, binds free ubiquitin non-covalently via its RING-type zinc finger. Ubiquitin-binding leads to enhance the E3 ubiquitin-protein ligase activity by stabilizing the ubiquitin-conjugating enzyme E2 (donor ubiquitin) in the 'closed' conformation and activating ubiquitin transfer. Functionally, E3 ubiquitin-protein ligase. Required for mesoderm patterning during embryonic development. Acts as an enhancer of the transcriptional responses of the SMAD2/SMAD3 effectors, which are activated downstream of BMP. Acts by mediating ubiquitination and degradation of SMAD inhibitors such as SMAD7, inducing their proteasomal degradation and thereby enhancing the transcriptional activity of TGF-beta and BMP. In addition to enhance transcription of SMAD2/SMAD3 effectors, also regulates their turnover by mediating their ubiquitination and subsequent degradation, coupling their activation with degradation, thereby ensuring that only effectors 'in use' are degraded. Activates SMAD3/SMAD4-dependent transcription by triggering signal-induced degradation of SNON isoform of SKIL. Associates with UBE2D2 as an E2 enzyme. Specifically binds polysumoylated chains via SUMO interaction motifs (SIMs) and mediates ubiquitination of sumoylated substrates. Catalyzes 'Lys-63'-linked ubiquitination of sumoylated XPC in response to UV irradiation, promoting nucleotide excision repair. Mediates ubiquitination and degradation of sumoylated PML. The regulation of the BMP-SMAD signaling is however independent of sumoylation and is not dependent of SUMO interaction motifs (SIMs). This chain is E3 ubiquitin-protein ligase Arkadia, found in Homo sapiens (Human).